The sequence spans 458 residues: MTFRKYFDCYDFYDRAKVGEKCTLDDWDLMKIPMKAMELKQKYGLDFKGEFIPTDKDMMEKLFKAGFEMLLECGIYCTDTHRIVKYTEDEIWDAINNVQKEFVLGTGRDAVNVRKRSVGDKAKPIVQGGPTGSPISEDVFMPVHMSYALEKEVDTIVNGVMTTVRGKAPIPKSPYEVLAAKTETRLIKNACAMAGRPGMGVOGPETSLSAQGNISADCAGGMTCTDSHEVSQLCELKIDLDAISVIAHYTANSDIIMDEQMPIFGGYAGGIEETTIVDVATHINAVLMSSASWHLDGPVHIRWGSTNTRETLMIAGWACATISEFTDILSGNQYYPCAGPCTEMCLLEASAQSITDTASGREILSGVASAKGVVTDKTTGMEARMMGEVARATAGVEISEVNVILDKLVALYEKNYASAPAGKTFQECYDVKTVTPTDEYMQVYDGARKKLEDLGLVF.

A non-standard amino acid (pyrrolysine) is located at residue Pyl-202.

Belongs to the monomethylamine methyltransferase family. In terms of assembly, can form a complex with MtmC (MtmC1 or MtmC2).

The catalysed reaction is Co(I)-[methylamine-specific corrinoid protein] + methylamine + H(+) = methyl-Co(III)-[methylamine-specific corrinoid protein] + NH4(+). It participates in one-carbon metabolism; methanogenesis from methylamine. Its function is as follows. Catalyzes the transfer of the methyl group from monomethylamine to the corrinoid cofactor of MtmC (MtmC1 or MtmC2). The chain is Monomethylamine methyltransferase MtmB2 (mtmB2) from Methanosarcina barkeri.